Here is a 473-residue protein sequence, read N- to C-terminus: Photosystem II CP43 reaction center protein (473 aa).

Residues 1–14 (MKTLYSLRRFYPVE) constitute a propeptide that is removed on maturation. T15 carries the post-translational modification N-acetylthreonine. Position 15 is a phosphothreonine (T15). The next 5 membrane-spanning stretches (helical) occupy residues 69–93 (LFEV…PHLA), 134–155 (LLGP…KDRN), 178–200 (KALY…RKIT), 255–275 (KPFA…LSYS), and 291–312 (WFNN…ASQA). E367 provides a ligand contact to [CaMn4O5] cluster. Residues 447–471 (RARAAAAGFEKGIDRDFEPVLSMTP) form a helical membrane-spanning segment.

It belongs to the PsbB/PsbC family. PsbC subfamily. As to quaternary structure, PSII is composed of 1 copy each of membrane proteins PsbA, PsbB, PsbC, PsbD, PsbE, PsbF, PsbH, PsbI, PsbJ, PsbK, PsbL, PsbM, PsbT, PsbX, PsbY, PsbZ, Psb30/Ycf12, at least 3 peripheral proteins of the oxygen-evolving complex and a large number of cofactors. It forms dimeric complexes. Binds multiple chlorophylls and provides some of the ligands for the Ca-4Mn-5O cluster of the oxygen-evolving complex. It may also provide a ligand for a Cl- that is required for oxygen evolution. PSII binds additional chlorophylls, carotenoids and specific lipids. serves as cofactor.

The protein localises to the plastid. The protein resides in the chloroplast thylakoid membrane. Its function is as follows. One of the components of the core complex of photosystem II (PSII). It binds chlorophyll and helps catalyze the primary light-induced photochemical processes of PSII. PSII is a light-driven water:plastoquinone oxidoreductase, using light energy to abstract electrons from H(2)O, generating O(2) and a proton gradient subsequently used for ATP formation. This chain is Photosystem II CP43 reaction center protein, found in Daucus carota (Wild carrot).